Here is a 222-residue protein sequence, read N- to C-terminus: Probable transaldolase 2 (222 aa).

The active-site Schiff-base intermediate with substrate is the K90.

Belongs to the transaldolase family. Type 3B subfamily.

It localises to the cytoplasm. It carries out the reaction D-sedoheptulose 7-phosphate + D-glyceraldehyde 3-phosphate = D-erythrose 4-phosphate + beta-D-fructose 6-phosphate. It participates in carbohydrate degradation; pentose phosphate pathway; D-glyceraldehyde 3-phosphate and beta-D-fructose 6-phosphate from D-ribose 5-phosphate and D-xylulose 5-phosphate (non-oxidative stage): step 2/3. In terms of biological role, transaldolase is important for the balance of metabolites in the pentose-phosphate pathway. The sequence is that of Probable transaldolase 2 from Bacillus cereus (strain ATCC 14579 / DSM 31 / CCUG 7414 / JCM 2152 / NBRC 15305 / NCIMB 9373 / NCTC 2599 / NRRL B-3711).